Here is a 350-residue protein sequence, read N- to C-terminus: tRNA pseudouridine synthase D (350 aa).

Residue Asp-79 is the Nucleophile of the active site. In terms of domain architecture, TRUD spans 154–306 (GAPNYYGPQR…EQERRPIVLY (153 aa)).

It belongs to the pseudouridine synthase TruD family.

It carries out the reaction uridine(13) in tRNA = pseudouridine(13) in tRNA. Responsible for synthesis of pseudouridine from uracil-13 in transfer RNAs. This chain is tRNA pseudouridine synthase D, found in Pseudoalteromonas atlantica (strain T6c / ATCC BAA-1087).